A 350-amino-acid polypeptide reads, in one-letter code: Bifunctional nitrilase/nitrile hydratase NIT4B (350 aa).

The CN hydrolase domain maps to 30 to 302 (VRATVVQAST…EALISADLDL (273 aa)). Glutamate 70 functions as the Proton acceptor in the catalytic mechanism. Lysine 157 is an active-site residue. Cysteine 191 (nucleophile) is an active-site residue.

This sequence belongs to the carbon-nitrogen hydrolase superfamily. Nitrilase family. Highly expressed in leaves and cotyledons, lower expression in stems and roots.

The catalysed reaction is L-asparagine = 3-cyano-L-alanine + H2O. It catalyses the reaction 3-cyano-L-alanine + 2 H2O = L-aspartate + NH4(+). Involved in the cyanide detoxification pathway. Has nitrilase and nitrile-hydratase activity in the ratio 3.3:1, producing both asparagine and aspartic acid from beta-cyano-L-alanine (Ala(CN)). Can also use 3-phenylpropionitrile as substrate, but not indole-3-acetonitrile. The sequence is that of Bifunctional nitrilase/nitrile hydratase NIT4B (NIT4B) from Lupinus angustifolius (Narrow-leaved blue lupine).